The following is a 443-amino-acid chain: ATP-dependent protease ATPase subunit HslU (443 aa).

ATP is bound by residues isoleucine 18, 60–65 (GVGKTE), aspartate 256, glutamate 321, and arginine 393.

The protein belongs to the ClpX chaperone family. HslU subfamily. In terms of assembly, a double ring-shaped homohexamer of HslV is capped on each side by a ring-shaped HslU homohexamer. The assembly of the HslU/HslV complex is dependent on binding of ATP.

It is found in the cytoplasm. Functionally, ATPase subunit of a proteasome-like degradation complex; this subunit has chaperone activity. The binding of ATP and its subsequent hydrolysis by HslU are essential for unfolding of protein substrates subsequently hydrolyzed by HslV. HslU recognizes the N-terminal part of its protein substrates and unfolds these before they are guided to HslV for hydrolysis. The polypeptide is ATP-dependent protease ATPase subunit HslU (Edwardsiella ictaluri (strain 93-146)).